Reading from the N-terminus, the 95-residue chain is Integration host factor subunit beta (95 aa).

Residues 59-95 (RVGRNPKTGQSVRLDGKFVPHFKPGKELRDRVNEDES) form a disordered region. Residues 72 to 95 (LDGKFVPHFKPGKELRDRVNEDES) are compositionally biased toward basic and acidic residues.

It belongs to the bacterial histone-like protein family. As to quaternary structure, heterodimer of an alpha and a beta chain.

This protein is one of the two subunits of integration host factor, a specific DNA-binding protein that functions in genetic recombination as well as in transcriptional and translational control. The sequence is that of Integration host factor subunit beta from Ectopseudomonas mendocina (strain ymp) (Pseudomonas mendocina).